We begin with the raw amino-acid sequence, 180 residues long: Telokin-like protein 20 (180 aa).

The segment at 112-180 (SKTDAAVHTS…KQKLDNAKQD (69 aa)) is disordered. A compositionally biased stretch (acidic residues) spans 156-165 (DFEENIDDGD).

This is Telokin-like protein 20 (TLP20) from Lepidoptera (butterflies and moths).